The primary structure comprises 325 residues: Hydroxymethylglutaryl-CoA lyase, mitochondrial (325 aa).

The N-terminal 27 residues, Met-1–Gly-27, are a transit peptide targeting the mitochondrion. The Pyruvate carboxyltransferase domain occupies Val-33 to Leu-300. Substrate is bound at residue Arg-41. Asp-42 is an a divalent metal cation binding site. At Lys-48 the chain carries N6-acetyllysine; alternate. Position 48 is an N6-succinyllysine; alternate (Lys-48). Lys-111 is modified (N6-acetyllysine). Lys-137 and Lys-179 each carry N6-acetyllysine; alternate. 2 positions are modified to N6-succinyllysine; alternate: Lys-137 and Lys-179. A divalent metal cation-binding residues include His-233 and His-235. Residue Cys-266 is part of the active site. Residue Asn-275 participates in a divalent metal cation binding. Residues Cys-323 to Leu-325 carry the Microbody targeting signal motif. Lys-324 is modified (N6-acetyllysine).

This sequence belongs to the HMG-CoA lyase family. In terms of assembly, homodimer; disulfide-linked. Can also form homotetramers.

Its subcellular location is the mitochondrion matrix. The protein resides in the peroxisome. It catalyses the reaction (3S)-3-hydroxy-3-methylglutaryl-CoA = acetoacetate + acetyl-CoA. It participates in metabolic intermediate metabolism; (S)-3-hydroxy-3-methylglutaryl-CoA degradation; acetoacetate from (S)-3-hydroxy-3-methylglutaryl-CoA: step 1/1. In terms of biological role, mitochondrial 3-hydroxy-3-methylglutaryl-CoA lyase that catalyzes a cation-dependent cleavage of (S)-3-hydroxy-3-methylglutaryl-CoA into acetyl-CoA and acetoacetate, a key step in ketogenesis. Terminal step in leucine catabolism. Ketone bodies (beta-hydroxybutyrate, acetoacetate and acetone) are essential as an alternative source of energy to glucose, as lipid precursors and as regulators of metabolism. The chain is Hydroxymethylglutaryl-CoA lyase, mitochondrial (HMGCL) from Pongo abelii (Sumatran orangutan).